The sequence spans 159 residues: Transmembrane protein 42 (159 aa).

Transmembrane regions (helical) follow at residues 37-57 (FWGV…AASA), 68-88 (GFCV…WTFF), 100-120 (IASV…GFVL), and 124-144 (CQEV…TLIH).

The protein localises to the membrane. The polypeptide is Transmembrane protein 42 (TMEM42) (Bos taurus (Bovine)).